The following is a 430-amino-acid chain: Enolase (430 aa).

Gln-167 contacts (2R)-2-phosphoglycerate. The Proton donor role is filled by Glu-209. 3 residues coordinate Mg(2+): Asp-246, Glu-289, and Asp-316. Positions 341, 370, 371, and 392 each coordinate (2R)-2-phosphoglycerate. The Proton acceptor role is filled by Lys-341.

Belongs to the enolase family. Component of the RNA degradosome, a multiprotein complex involved in RNA processing and mRNA degradation. Mg(2+) is required as a cofactor.

It is found in the cytoplasm. Its subcellular location is the secreted. The protein localises to the cell surface. It catalyses the reaction (2R)-2-phosphoglycerate = phosphoenolpyruvate + H2O. The protein operates within carbohydrate degradation; glycolysis; pyruvate from D-glyceraldehyde 3-phosphate: step 4/5. In terms of biological role, catalyzes the reversible conversion of 2-phosphoglycerate (2-PG) into phosphoenolpyruvate (PEP). It is essential for the degradation of carbohydrates via glycolysis. This chain is Enolase, found in Alcanivorax borkumensis (strain ATCC 700651 / DSM 11573 / NCIMB 13689 / SK2).